The following is a 435-amino-acid chain: ATP-dependent protease ATPase subunit HslU (435 aa).

ATP is bound by residues Val18, 60–65, Asp248, Glu313, and Arg385; that span reads GVGKTE.

The protein belongs to the ClpX chaperone family. HslU subfamily. In terms of assembly, a double ring-shaped homohexamer of HslV is capped on each side by a ring-shaped HslU homohexamer. The assembly of the HslU/HslV complex is dependent on binding of ATP.

The protein localises to the cytoplasm. ATPase subunit of a proteasome-like degradation complex; this subunit has chaperone activity. The binding of ATP and its subsequent hydrolysis by HslU are essential for unfolding of protein substrates subsequently hydrolyzed by HslV. HslU recognizes the N-terminal part of its protein substrates and unfolds these before they are guided to HslV for hydrolysis. This is ATP-dependent protease ATPase subunit HslU from Parvibaculum lavamentivorans (strain DS-1 / DSM 13023 / NCIMB 13966).